The chain runs to 120 residues: Large ribosomal subunit protein uL18 (120 aa).

It belongs to the universal ribosomal protein uL18 family. Part of the 50S ribosomal subunit; part of the 5S rRNA/L5/L18/L25 subcomplex. Contacts the 5S and 23S rRNAs.

Its function is as follows. This is one of the proteins that bind and probably mediate the attachment of the 5S RNA into the large ribosomal subunit, where it forms part of the central protuberance. In Rhizobium etli (strain CIAT 652), this protein is Large ribosomal subunit protein uL18.